The sequence spans 894 residues: Cell wall-associated protease (894 aa).

The first 31 residues, 1-31 (MKRRKFSSVVAAVLIFALIFSLFSPGTKAAA), serve as a signal peptide directing secretion. Residues 422 to 729 (QWPLKNNGEN…YGRLNVMKAV (308 aa)) enclose the Peptidase S8 domain. Residues Asp-462, His-497, and Ser-650 each act as charge relay system in the active site.

This sequence belongs to the peptidase S8 family. Post-translationally, proteolytically cleaved to yield CWBP23 and CWBP52.

The protein resides in the secreted. The protein localises to the cell wall. Its activity is regulated as follows. Inhibited by PMSF. In terms of biological role, CWBP52 is a serine-type protease that could be involved in proteoglycan peptide bridges. This chain is Cell wall-associated protease (wprA), found in Bacillus subtilis (strain 168).